A 569-amino-acid chain; its full sequence is Urease subunit beta (569 aa).

Positions 131–569 (GGIDTHIHFI…VSLAQLFSIF (439 aa)) constitute a Urease domain. Positions 136, 138, and 219 each coordinate Ni(2+). Position 219 is an N6-carboxylysine (K219). Substrate is bound at residue H221. Ni(2+) contacts are provided by H248 and H274. The active-site Proton donor is H322. D362 is a binding site for Ni(2+).

The protein belongs to the metallo-dependent hydrolases superfamily. Urease alpha subunit family. Heterohexamer of 3 UreA (alpha) and 3 UreB (beta) subunits. Ni cation is required as a cofactor. In terms of processing, carboxylation allows a single lysine to coordinate two nickel ions.

Its subcellular location is the cytoplasm. It catalyses the reaction urea + 2 H2O + H(+) = hydrogencarbonate + 2 NH4(+). The protein operates within nitrogen metabolism; urea degradation; CO(2) and NH(3) from urea (urease route): step 1/1. This is Urease subunit beta from Helicobacter pylori (strain Shi470).